Here is a 165-residue protein sequence, read N- to C-terminus: Large ribosomal subunit protein uL15 (165 aa).

The segment covering 1–29 has biased composition (basic residues); the sequence is MTSKKKRQRGSRTHGGGSHKNRRGAGHRG. 2 disordered regions span residues 1–59 and 133–165; these read MTSK…QKVQ and KVEG…ADEE. Over residues 30 to 47 the composition is skewed to basic and acidic residues; it reads GRGDAGRDKHEFHNHEPL. Acidic residues predominate over residues 154 to 165; sequence AEETEDADADEE.

The protein belongs to the universal ribosomal protein uL15 family. In terms of assembly, part of the 50S ribosomal subunit. Interacts weakly with proteins L18e and L32e.

Functionally, binds to the 23S rRNA. This chain is Large ribosomal subunit protein uL15 (rpl15), found in Haloarcula marismortui (strain ATCC 43049 / DSM 3752 / JCM 8966 / VKM B-1809) (Halobacterium marismortui).